Here is a 131-residue protein sequence, read N- to C-terminus: Large ribosomal subunit protein bL12 (131 aa).

It belongs to the bacterial ribosomal protein bL12 family. As to quaternary structure, homodimer. Part of the ribosomal stalk of the 50S ribosomal subunit. Forms a multimeric L10(L12)X complex, where L10 forms an elongated spine to which 2 to 4 L12 dimers bind in a sequential fashion. Binds GTP-bound translation factors.

Its function is as follows. Forms part of the ribosomal stalk which helps the ribosome interact with GTP-bound translation factors. Is thus essential for accurate translation. This chain is Large ribosomal subunit protein bL12, found in Nocardioides sp. (strain ATCC BAA-499 / JS614).